Consider the following 217-residue polypeptide: Putative thymidylate synthase (217 aa).

Cys-139 is a catalytic residue.

It belongs to the thymidylate synthase family. Archaeal-type ThyA subfamily. As to quaternary structure, monomer.

Its subcellular location is the cytoplasm. The protein operates within pyrimidine metabolism; dTTP biosynthesis. Functionally, may catalyze the biosynthesis of dTMP using an unknown cosubstrate. The polypeptide is Putative thymidylate synthase (Methanosarcina acetivorans (strain ATCC 35395 / DSM 2834 / JCM 12185 / C2A)).